The primary structure comprises 164 residues: Peptide deformylase (164 aa).

Residues Cys87 and His129 each coordinate Fe cation. Residue Glu130 is part of the active site. Residue His133 coordinates Fe cation.

Belongs to the polypeptide deformylase family. Fe(2+) serves as cofactor.

The enzyme catalyses N-terminal N-formyl-L-methionyl-[peptide] + H2O = N-terminal L-methionyl-[peptide] + formate. In terms of biological role, removes the formyl group from the N-terminal Met of newly synthesized proteins. Requires at least a dipeptide for an efficient rate of reaction. N-terminal L-methionine is a prerequisite for activity but the enzyme has broad specificity at other positions. The protein is Peptide deformylase of Thermotoga maritima (strain ATCC 43589 / DSM 3109 / JCM 10099 / NBRC 100826 / MSB8).